The primary structure comprises 419 residues: Serine--tRNA ligase (419 aa).

226–228 is a binding site for L-serine; it reads TSE. Residues 257 to 259 and Val273 contribute to the ATP site; that span reads RRE. Glu280 is an L-serine binding site. 344 to 347 contacts ATP; that stretch reads ELTS. Thr379 serves as a coordination point for L-serine.

This sequence belongs to the class-II aminoacyl-tRNA synthetase family. Type-1 seryl-tRNA synthetase subfamily. As to quaternary structure, homodimer. The tRNA molecule binds across the dimer.

The protein localises to the cytoplasm. It carries out the reaction tRNA(Ser) + L-serine + ATP = L-seryl-tRNA(Ser) + AMP + diphosphate + H(+). The enzyme catalyses tRNA(Sec) + L-serine + ATP = L-seryl-tRNA(Sec) + AMP + diphosphate + H(+). Its pathway is aminoacyl-tRNA biosynthesis; selenocysteinyl-tRNA(Sec) biosynthesis; L-seryl-tRNA(Sec) from L-serine and tRNA(Sec): step 1/1. In terms of biological role, catalyzes the attachment of serine to tRNA(Ser). Is also able to aminoacylate tRNA(Sec) with serine, to form the misacylated tRNA L-seryl-tRNA(Sec), which will be further converted into selenocysteinyl-tRNA(Sec). This Corynebacterium efficiens (strain DSM 44549 / YS-314 / AJ 12310 / JCM 11189 / NBRC 100395) protein is Serine--tRNA ligase.